Reading from the N-terminus, the 567-residue chain is uncharacterized protein (567 aa).

The tract at residues 1-26 (MPSEKATTRHLPGAVETLSPRTGRRP) is disordered. 6 helical membrane-spanning segments follow: residues 57–77 (AILV…TVAF), 90–110 (VSFG…TYWL), 142–162 (VALA…IIYG), 173–193 (LFSM…LTEF), 221–241 (MLVW…TAIF), and 257–277 (VLIL…ILAW). Positions 277 to 329 (WLTATPVRVVREALNRVEQGDLSGDLVVFDGTELGELQRGFNRMVEGLRERER) constitute an HAMP domain. The region spanning 361–485 (AVVFVDIVGS…EPVNEAARLC (125 aa)) is the Guanylate cyclase domain.

This sequence belongs to the adenylyl cyclase class-3 family.

The protein resides in the cell membrane. This is an uncharacterized protein from Mycobacterium bovis (strain ATCC BAA-935 / AF2122/97).